Consider the following 342-residue polypeptide: Ribosomal RNA small subunit methyltransferase C (342 aa).

Belongs to the methyltransferase superfamily. RsmC family. In terms of assembly, monomer.

The protein resides in the cytoplasm. The catalysed reaction is guanosine(1207) in 16S rRNA + S-adenosyl-L-methionine = N(2)-methylguanosine(1207) in 16S rRNA + S-adenosyl-L-homocysteine + H(+). Its function is as follows. Specifically methylates the guanine in position 1207 of 16S rRNA in the 30S particle. The polypeptide is Ribosomal RNA small subunit methyltransferase C (Erwinia tasmaniensis (strain DSM 17950 / CFBP 7177 / CIP 109463 / NCPPB 4357 / Et1/99)).